The following is a 126-amino-acid chain: Probable flagellum biosynthesis repressor protein FlbT (126 aa).

Belongs to the FlbT family.

In terms of biological role, has a post-transcriptional repressor function in flagellum biogenesis. Associates with the 5'-UTR of fljK mRNA and promotes its degradation. In Rhodopseudomonas palustris (strain ATCC BAA-98 / CGA009), this protein is Probable flagellum biosynthesis repressor protein FlbT.